We begin with the raw amino-acid sequence, 669 residues long: CoB--CoM heterodisulfide reductase iron-sulfur subunit A 1 (669 aa).

An FAD-binding site is contributed by Gly153 to Glu176. Position 200 (Sec200) is a non-standard amino acid, selenocysteine. 4 consecutive 4Fe-4S ferredoxin-type domains span residues Lys239–Gly270, Leu287–Glu318, Ile584–Lys613, and Arg617–Tyr646. [4Fe-4S] cluster is bound by residues Cys249, Cys252, Cys255, Cys259, Cys296, Cys299, Cys302, Cys306, Cys593, Cys596, Cys599, Cys603, Cys626, Cys629, Cys632, and Cys636.

It belongs to the HdrA family. In terms of assembly, the ferredoxin:CoB-CoM heterodisulfide reductase is composed of three subunits; HdrA, HdrB and HdrC. It depends on [4Fe-4S] cluster as a cofactor. FAD serves as cofactor.

The protein operates within cofactor metabolism; coenzyme M-coenzyme B heterodisulfide reduction; coenzyme B and coenzyme M from coenzyme M-coenzyme B heterodisulfide: step 1/1. Part of a complex that catalyzes the reversible reduction of CoM-S-S-CoB to the thiol-coenzymes H-S-CoM (coenzyme M) and H-S-CoB (coenzyme B). This is CoB--CoM heterodisulfide reductase iron-sulfur subunit A 1 (hdrA1) from Methanopyrus kandleri (strain AV19 / DSM 6324 / JCM 9639 / NBRC 100938).